A 481-amino-acid chain; its full sequence is WD repeat-containing protein 55 homolog (481 aa).

Residues 1–116 form a disordered region; sequence MHTHNHFKTP…NRDVETNFDL (116 aa). Composition is skewed to acidic residues over residues 12–23, 31–46, and 68–81; these read DAEEVDDLDDEM, IEQE…DDGF, and DSFD…DSDD. 6 WD repeats span residues 144–183, 188–227, 231–269, 272–311, 314–353, and 398–437; these read KLED…NKLI, VHSK…LKKL, AHDD…HVFE, QIDD…LYVQ, PYEE…YHCD, and QHNM…DFGD.

This sequence belongs to the WD repeat WDR55 family.

This chain is WD repeat-containing protein 55 homolog, found in Drosophila ananassae (Fruit fly).